Here is a 116-residue protein sequence, read N- to C-terminus: Small ribosomal subunit protein bS16 (116 aa).

A disordered region spans residues 88-116 (RNNPKAAVPGKRMAELAKKKAERAAASAE). Residues 99–110 (RMAELAKKKAER) are compositionally biased toward basic and acidic residues.

The protein belongs to the bacterial ribosomal protein bS16 family.

The protein is Small ribosomal subunit protein bS16 of Cereibacter sphaeroides (strain ATCC 17025 / ATH 2.4.3) (Rhodobacter sphaeroides).